The primary structure comprises 135 residues: Large ribosomal subunit protein uL16c (135 aa).

It belongs to the universal ribosomal protein uL16 family. Part of the 50S ribosomal subunit.

Its subcellular location is the plastid. It is found in the chloroplast. This chain is Large ribosomal subunit protein uL16c, found in Morus indica (Mulberry).